Consider the following 116-residue polypeptide: Iron-sulfur cluster insertion protein ErpA (116 aa).

Iron-sulfur cluster is bound by residues Cys-44, Cys-108, and Cys-110.

It belongs to the HesB/IscA family. Homodimer. Iron-sulfur cluster serves as cofactor.

In terms of biological role, required for insertion of 4Fe-4S clusters for at least IspG. In Shewanella sp. (strain ANA-3), this protein is Iron-sulfur cluster insertion protein ErpA.